A 116-amino-acid polypeptide reads, in one-letter code: Vitelline membrane protein Vm32E (116 aa).

A signal peptide spans 1–17 (MKIVAFTLVAFVALAGA). Residues 36-73 (GYPAPPCPTNYLFSCQPNLAPAPCAQEAPAYGSAGAYT) form the VM domain.

It belongs to the vitelline membrane family.

Its subcellular location is the secreted. In terms of biological role, major early eggshell protein. The chain is Vitelline membrane protein Vm32E from Drosophila santomea (Fruit fly).